A 364-amino-acid chain; its full sequence is MSLAGGRAPRKTAGNRLSGLLEKEEEDEFYQTTYGGFTEESGDDEYQGDQSDTEDEVDSDFDIDEGDEPSSDGEAEEPRRKRRVVTKAYKEPLKSLRPRKVSTPAGSSQKTREEKALLPLELQDDGTDSRKSMRQSTAEHTRQTFLRVQERQGQSRRRKGPHCERPLTQEELLREAKITEELNLRSLETYERLEADKKKQVHKKRKCPGPIITYHSVTVPLVGEPGPKEENVDVEGLDPAPMASALAARAGTGPVIPPARCSRTFITFSDDATFEEWFPQGRTPKIPVREVCPVTHRPALYRDPVTDIPYATARAFKIIREAYKKYITAHGLPPTASALGPGPPPPEPLPGSGPRALRQKIVIK.

Disordered regions lie at residues 1–164 (MSLA…PHCE) and 335–357 (TASALGPGPPPPEPLPGSGPRAL). Residues 40–75 (ESGDDEYQGDQSDTEDEVDSDFDIDEGDEPSSDGEA) show a composition bias toward acidic residues. Lys115 is covalently cross-linked (Glycyl lysine isopeptide (Lys-Gly) (interchain with G-Cter in SUMO2)). Basic and acidic residues predominate over residues 127–142 (TDSRKSMRQSTAEHTR). Phosphoserine is present on Ser129. The DNA-binding element occupies 156 to 206 (RRRKGPHCERPLTQEELLREAKITEELNLRSLETYERLEADKKKQVHKKRK). Residues 341-351 (PGPPPPEPLPG) are compositionally biased toward pro residues.

It belongs to the VPS72/YL1 family. Component of the NuA4 histone acetyltransferase complex which contains the catalytic subunit KAT5/TIP60 and the subunits EP400, TRRAP/PAF400, BRD8/SMAP, EPC1, DMAP1/DNMAP1, RUVBL1/TIP49, RUVBL2, ING3, actin, ACTL6A/BAF53A, MORF4L1/MRG15, MORF4L2/MRGX, MRGBP, YEATS4/GAS41 and VPS72/YL1. Component of a NuA4-related complex which contains EP400, TRRAP/PAF400, SRCAP, BRD8/SMAP, EPC1, DMAP1/DNMAP1, RUVBL1/TIP49, RUVBL2, actin, ACTL6A/BAF53A, VPS72 and YEATS4/GAS41. Also part of a multiprotein complex which contains SRCAP and which binds to H2AZ1/H2AZ. Interacts (via N-terminal domain) with H2AZ1; the interaction is enhanced by VPS72 phosphorylation which is promoted by ZNHIT1. In terms of processing, phosphorylation is enhanced by ZNHIT1 and promotes the interaction of VPS72 with histone H2AZ1.

Its subcellular location is the nucleus. Deposition-and-exchange histone chaperone specific for H2AZ1, specifically chaperones H2AZ1 and deposits it into nucleosomes. As component of the SRCAP complex, mediates the ATP-dependent exchange of histone H2AZ1/H2B dimers for nucleosomal H2A/H2B, leading to transcriptional regulation of selected genes by chromatin remodeling. The polypeptide is Vacuolar protein sorting-associated protein 72 homolog (VPS72) (Bos taurus (Bovine)).